Reading from the N-terminus, the 46-residue chain is MELATLVTLFVSGLLMSFTGYALYTAFGQPSQQLRDPFEEHGNELK.

The chain crosses the membrane as a helical span at residues 5–27 (TLVTLFVSGLLMSFTGYALYTAF).

The protein belongs to the PsbN family.

It localises to the plastid membrane. May play a role in photosystem I and II biogenesis. This chain is Protein PsbN, found in Cuscuta obtusiflora (Peruvian dodder).